The following is a 165-amino-acid chain: Small ribosomal subunit protein eS10 (165 aa).

Tyr12 is modified (phosphotyrosine). The tract at residues 90-165 (VPATLRRSRP…FGRGRGQPPQ (76 aa)) is disordered. The span at 97–128 (SRPETGRPRPKGPEGERPARFTRGEADRDTYR) shows a compositional bias: basic and acidic residues. Glycyl lysine isopeptide (Lys-Gly) (interchain with G-Cter in ubiquitin) cross-links involve residues Lys138 and Lys139. Residue Ser146 is modified to Phosphoserine. Arg153 carries the post-translational modification Omega-N-methylarginine. Positions 154-165 (GGFGRGRGQPPQ) are enriched in gly residues. Symmetric dimethylarginine occurs at positions 158 and 160.

Belongs to the eukaryotic ribosomal protein eS10 family. In terms of assembly, component of the small ribosomal subunit. The methylated form interacts with NPM1. Methylated by PRMT5. Methylation is necessary for its interaction with NPS1, its localization in the granular component (GC) region of the nucleolus, for the proper assembly of ribosomes, protein synthesis and optimal cell proliferation. In terms of processing, monoubiquitinated by ZNF598 when a ribosome has stalled during translation of poly(A) sequences, leading to preclude synthesis of a long poly-lysine tail and initiate the ribosome quality control (RQC) pathway to degrade the potentially detrimental aberrant nascent polypeptide. Deubiquitinated by OTUD3 and USP21, antagonizing ZNF598 activity. Deubiquitinated by OTUD1, antagonizing ZNF598 activity and stimulating formation of polysomes: deubiquitination by OTUD1 promotes stability and translation of a subset mRNAs with a high abundance of rare codons can limit the translation rate. Deubiquitinated by USP10.

The protein resides in the cytoplasm. It is found in the nucleus. Its subcellular location is the nucleolus. Its function is as follows. Component of the 40S ribosomal subunit. The ribosome is a large ribonucleoprotein complex responsible for the synthesis of proteins in the cell. This chain is Small ribosomal subunit protein eS10 (Rps10), found in Rattus norvegicus (Rat).